The chain runs to 567 residues: Pyrethroid hydrolase Ces2e (567 aa).

Residues 1–36 (MAQTRAWKSIMPLESLPGWLNAVVWGLLLLFCQVQG) form the signal peptide. Gln37 is modified (pyrrolidone carboxylic acid). A disulfide bridge links Cys105 with Cys132. Ser237 (acyl-ester intermediate) is an active-site residue. An intrachain disulfide couples Cys289 to Cys300. Catalysis depends on charge relay system residues Glu354 and His465.

The protein belongs to the type-B carboxylesterase/lipase family. In terms of tissue distribution, expressed in liver.

Its subcellular location is the microsome. It carries out the reaction all-trans-retinyl hexadecanoate + H2O = all-trans-retinol + hexadecanoate + H(+). The catalysed reaction is (-)-trans-permethrin + H2O = (3-phenoxyphenyl)methanol + (1S,3R)-3-(2,2-dichlorovinyl)-2,2-dimethylcyclopropanecarboxylate + H(+). Carboxylesterase that catalyzes the hydrolysis of pyrethroids pesticides. Hydrolyzes trans-permethrin at a rate about 22-fold higher than cis-permethrin. Also hydrolyzes trans-cypermethrin. Hydrolyzes retinyl esters. This chain is Pyrethroid hydrolase Ces2e, found in Rattus norvegicus (Rat).